The primary structure comprises 191 residues: Elongation factor P (191 aa).

Lys-34 carries the post-translational modification N6-(3,6-diaminohexanoyl)-5-hydroxylysine.

The protein belongs to the elongation factor P family. In terms of processing, may be beta-lysylated on the epsilon-amino group of Lys-34 by the combined action of EpmA and EpmB, and then hydroxylated on the C5 position of the same residue by EpmC (if this protein is present). Lysylation is critical for the stimulatory effect of EF-P on peptide-bond formation. The lysylation moiety may extend toward the peptidyltransferase center and stabilize the terminal 3-CCA end of the tRNA. Hydroxylation of the C5 position on Lys-34 may allow additional potential stabilizing hydrogen-bond interactions with the P-tRNA.

The protein resides in the cytoplasm. The protein operates within protein biosynthesis; polypeptide chain elongation. In terms of biological role, involved in peptide bond synthesis. Alleviates ribosome stalling that occurs when 3 or more consecutive Pro residues or the sequence PPG is present in a protein, possibly by augmenting the peptidyl transferase activity of the ribosome. Modification of Lys-34 is required for alleviation. The protein is Elongation factor P of Colwellia psychrerythraea (strain 34H / ATCC BAA-681) (Vibrio psychroerythus).